Consider the following 442-residue polypeptide: UDP-N-acetylmuramoylalanine--D-glutamate ligase (442 aa).

An ATP-binding site is contributed by 115 to 121; the sequence is GSNGKST.

The protein belongs to the MurCDEF family.

It localises to the cytoplasm. It carries out the reaction UDP-N-acetyl-alpha-D-muramoyl-L-alanine + D-glutamate + ATP = UDP-N-acetyl-alpha-D-muramoyl-L-alanyl-D-glutamate + ADP + phosphate + H(+). It functions in the pathway cell wall biogenesis; peptidoglycan biosynthesis. Cell wall formation. Catalyzes the addition of glutamate to the nucleotide precursor UDP-N-acetylmuramoyl-L-alanine (UMA). The protein is UDP-N-acetylmuramoylalanine--D-glutamate ligase of Aliivibrio salmonicida (strain LFI1238) (Vibrio salmonicida (strain LFI1238)).